The sequence spans 187 residues: Transcriptional regulator VspR (187 aa).

Its function is as follows. Represses the transcription of several genes encoded within the Vibrio 7th pandemic island-1 (VSP-1), including dncV, VC_0176, VC_0178 and VC_0180. This chain is Transcriptional regulator VspR (vspR), found in Vibrio cholerae serotype O1 (strain ATCC 39315 / El Tor Inaba N16961).